Consider the following 684-residue polypeptide: Histone-lysine N-methyltransferase SETMAR (684 aa).

The interval 1-345 (MFAEAAKTTR…RLTLETMKMM (345 aa)) is histone-lysine N-methyltransferase. A Pre-SET domain is found at 73–136 (PGCICVKTPC…HCRNRVVQKG (64 aa)). Zn(2+) contacts are provided by Cys-75, Cys-77, Cys-82, Cys-87, Cys-89, Cys-118, Cys-122, Cys-124, and Cys-128. Residues 139 to 263 (FHFQVFKTHK…PEEELSYDYS (125 aa)) enclose the SET domain. S-adenosyl-L-methionine-binding positions include 149 to 151 (KGW), Tyr-192, Arg-220, and 223 to 224 (NH). Zn(2+) is bound by residues Cys-226, Cys-287, Cys-289, and Cys-294. The Post-SET domain occupies 283–299 (LRKPCYCGAKSCTAFLP). Positions 346 to 684 (LDKKQIRAIF…CVDCNGSYFD (339 aa)) are mariner transposase Hsmar1. DNA-binding regions (H-T-H motif) lie at residues 364 to 395 (KAAE…KFCK) and 428 to 448 (TTRE…RHLK). Asp-496 is a binding site for Mg(2+). Lys-498 is modified (N6-methyllysine). Residue Ser-508 is modified to Phosphoserine; by CHEK1. Asp-588 lines the Mg(2+) pocket.

This sequence in the N-terminal section; belongs to the class V-like SAM-binding methyltransferase superfamily. The protein in the C-terminal section; belongs to the mariner transposase family. In terms of assembly, homodimer. Interacts with PRPF19; required for SETMAR recruitment to damaged DNA sites. Interacts with PCNA. Interacts with TOP2A; stimulates TOP2A topoisomerase activity. May interact with RAD9A and/or RAD9B. Mg(2+) serves as cofactor. In terms of processing, methylated. Methylation regulates activity in DNA decatenation. Phosphorylated at Ser-508 by CHEK1 and dephosphorylated by protein phosphatase 2A/PP2A. Phosphorylation at Ser-508 is enhanced by DNA damage and promotes recruitment to damaged DNA. It stimulates DNA repair and impairs replication fork restart. As to expression, widely expressed, with highest expression in placenta and ovary and lowest expression in skeletal muscle.

It localises to the nucleus. The protein localises to the chromosome. The catalysed reaction is L-lysyl(36)-[histone H3] + 2 S-adenosyl-L-methionine = N(6),N(6)-dimethyl-L-lysyl(36)-[histone H3] + 2 S-adenosyl-L-homocysteine + 2 H(+). Its function is as follows. Protein derived from the fusion of a methylase with the transposase of an Hsmar1 transposon that plays a role in DNA double-strand break repair, stalled replication fork restart and DNA integration. DNA-binding protein, it is indirectly recruited to sites of DNA damage through protein-protein interactions. Also has kept a sequence-specific DNA-binding activity recognizing the 19-mer core of the 5'-terminal inverted repeats (TIRs) of the Hsmar1 element and displays a DNA nicking and end joining activity. In parallel, has a histone methyltransferase activity and methylates 'Lys-4' and 'Lys-36' of histone H3. Specifically mediates dimethylation of H3 'Lys-36' at sites of DNA double-strand break and may recruit proteins required for efficient DSB repair through non-homologous end-joining. Also regulates replication fork processing, promoting replication fork restart and regulating DNA decatenation through stimulation of the topoisomerase activity of TOP2A. This is Histone-lysine N-methyltransferase SETMAR from Homo sapiens (Human).